Consider the following 305-residue polypeptide: Pseudouridine-5'-phosphate glycosidase (305 aa).

E22 acts as the Proton donor in catalysis. Residues K84 and V104 each contribute to the substrate site. D136 provides a ligand contact to Mn(2+). A substrate-binding site is contributed by 138–140 (SAD). K157 functions as the Nucleophile in the catalytic mechanism.

Belongs to the pseudouridine-5'-phosphate glycosidase family. As to quaternary structure, homotrimer. The cofactor is Mn(2+).

It carries out the reaction D-ribose 5-phosphate + uracil = psi-UMP + H2O. Its function is as follows. Catalyzes the reversible cleavage of pseudouridine 5'-phosphate (PsiMP) to ribose 5-phosphate and uracil. Functions biologically in the cleavage direction, as part of a pseudouridine degradation pathway. The protein is Pseudouridine-5'-phosphate glycosidase of Chloroflexus aurantiacus (strain ATCC 29364 / DSM 637 / Y-400-fl).